Reading from the N-terminus, the 232-residue chain is Large ribosomal subunit protein uL1 (232 aa).

The protein belongs to the universal ribosomal protein uL1 family. Part of the 50S ribosomal subunit.

Binds directly to 23S rRNA. The L1 stalk is quite mobile in the ribosome, and is involved in E site tRNA release. Its function is as follows. Protein L1 is also a translational repressor protein, it controls the translation of the L11 operon by binding to its mRNA. The sequence is that of Large ribosomal subunit protein uL1 from Paraburkholderia phytofirmans (strain DSM 17436 / LMG 22146 / PsJN) (Burkholderia phytofirmans).